The chain runs to 432 residues: Asparagine--tRNA ligase (432 aa).

It belongs to the class-II aminoacyl-tRNA synthetase family. As to quaternary structure, homodimer.

The protein localises to the cytoplasm. It catalyses the reaction tRNA(Asn) + L-asparagine + ATP = L-asparaginyl-tRNA(Asn) + AMP + diphosphate + H(+). This Lactobacillus helveticus (strain DPC 4571) protein is Asparagine--tRNA ligase.